The following is a 787-amino-acid chain: Endonuclease MutS2 (787 aa).

334–341 contacts ATP; sequence GPNTGGKT. The tract at residues 685 to 709 is disordered; the sequence is KAQDPAKSAKQPRASVKRSGSSGMS. In terms of domain architecture, Smr spans 712-787; that stretch reads LDLRGHRYEE…GDGSTVVHFK (76 aa).

This sequence belongs to the DNA mismatch repair MutS family. MutS2 subfamily. Homodimer. Binds to stalled ribosomes, contacting rRNA.

Endonuclease that is involved in the suppression of homologous recombination and thus may have a key role in the control of bacterial genetic diversity. Its function is as follows. Acts as a ribosome collision sensor, splitting the ribosome into its 2 subunits. Detects stalled/collided 70S ribosomes which it binds and splits by an ATP-hydrolysis driven conformational change. Acts upstream of the ribosome quality control system (RQC), a ribosome-associated complex that mediates the extraction of incompletely synthesized nascent chains from stalled ribosomes and their subsequent degradation. Probably generates substrates for RQC. This chain is Endonuclease MutS2, found in Levilactobacillus brevis (strain ATCC 367 / BCRC 12310 / CIP 105137 / JCM 1170 / LMG 11437 / NCIMB 947 / NCTC 947) (Lactobacillus brevis).